Consider the following 482-residue polypeptide: Keratin, type I cytoskeletal 39 (482 aa).

Positions 1–24 (MDTKGSTVTISSSTPPQNCSGNTN) are disordered. The interval 1-91 (MDTKGSTVTI…RCTEGINTHE (91 aa)) is head. In terms of domain architecture, IF rod spans 91-402 (EKETMQILNE…SLLESLDGRL (312 aa)). The interval 92–126 (KETMQILNERLANYLEKVRMLEGENADLEDKIQEA) is coil 1A. Residues 127–137 (CSKALPILCPD) are linker 1. The coil 1B stretch occupies residues 138-238 (YLSYYTTIEE…HEEEVNSLQC (101 aa)). A linker 12 region spans residues 239-254 (QLGDRINIEVTAAPSV). Residues 255-398 (DLNQILQEMR…ATYRSLLESL (144 aa)) form a coil 2 region. The tract at residues 399–482 (DGRLPCNPCA…PCYITRATKV (84 aa)) is tail.

This sequence belongs to the intermediate filament family. As to quaternary structure, heterotetramer of two type I and two type II keratins.

Its function is as follows. May play a role in late hair differentiation. This is Keratin, type I cytoskeletal 39 (Krt39) from Mus musculus (Mouse).